An 88-amino-acid polypeptide reads, in one-letter code: Small ribosomal subunit protein bS18 (88 aa).

Positions M1–V22 are disordered.

Belongs to the bacterial ribosomal protein bS18 family. As to quaternary structure, part of the 30S ribosomal subunit. Forms a tight heterodimer with protein bS6.

Functionally, binds as a heterodimer with protein bS6 to the central domain of the 16S rRNA, where it helps stabilize the platform of the 30S subunit. The protein is Small ribosomal subunit protein bS18 (rpsR) of Thermus thermophilus (strain ATCC BAA-163 / DSM 7039 / HB27).